A 282-amino-acid polypeptide reads, in one-letter code: D-alanine aminotransferase (282 aa).

Tyr32 contacts substrate. Arg51 is a binding site for pyridoxal 5'-phosphate. Residues Arg99 and His101 each contribute to the substrate site. The active-site Proton acceptor is Lys146. Lys146 bears the N6-(pyridoxal phosphate)lysine mark. Glu178 contributes to the pyridoxal 5'-phosphate binding site.

It belongs to the class-IV pyridoxal-phosphate-dependent aminotransferase family. Homodimer. The cofactor is pyridoxal 5'-phosphate.

The catalysed reaction is D-alanine + 2-oxoglutarate = D-glutamate + pyruvate. In terms of biological role, acts on the D-isomers of alanine, leucine, aspartate, glutamate, aminobutyrate, norvaline and asparagine. The enzyme transfers an amino group from a substrate D-amino acid to the pyridoxal phosphate cofactor to form pyridoxamine and an alpha-keto acid in the first half-reaction. The second half-reaction is the reverse of the first, transferring the amino group from the pyridoxamine to a second alpha-keto acid to form the product D-amino acid via a ping-pong mechanism. This is an important process in the formation of D-alanine and D-glutamate, which are essential bacterial cell wall components. The sequence is that of D-alanine aminotransferase (dat) from Staphylococcus aureus (strain COL).